A 210-amino-acid polypeptide reads, in one-letter code: MAKQKVPAAPSVRRLPSYLHLVKKAEADKLEYISGTVIAEELELEPIQVRKDLTITGIVGKPKKGYPVKLLITAIEKFLGWNKEKKAFVIGAGSLGTALSGYQGFKEHGLDICAAFDSDKRKIGKEIHELPVFGMDELETKVKEYKPEIAILTVPSKYAQEAANAIVKAGIKAIWNFTNIKITVPDKVIVQKEDLSSGYAMLGVMMNTKK.

The H-T-H motif DNA-binding region spans 17–56 (SYLHLVKKAEADKLEYISGTVIAEELELEPIQVRKDLTIT). 91 to 96 (GAGSLG) lines the NAD(+) pocket.

This sequence belongs to the transcriptional regulatory Rex family. In terms of assembly, homodimer.

The protein resides in the cytoplasm. Modulates transcription in response to changes in cellular NADH/NAD(+) redox state. This chain is Redox-sensing transcriptional repressor Rex, found in Treponema denticola (strain ATCC 35405 / DSM 14222 / CIP 103919 / JCM 8153 / KCTC 15104).